The sequence spans 138 residues: Large ribosomal subunit protein uL16 (138 aa).

Belongs to the universal ribosomal protein uL16 family. Part of the 50S ribosomal subunit.

In terms of biological role, binds 23S rRNA and is also seen to make contacts with the A and possibly P site tRNAs. This is Large ribosomal subunit protein uL16 from Chlamydia muridarum (strain MoPn / Nigg).